A 207-amino-acid chain; its full sequence is Calcipressin-like protein (207 aa).

A required for tax-6 interaction region spans residues 176–181; sequence PAIIVH.

This sequence belongs to the RCAN family. In terms of assembly, interacts with tax-6 (via catalytic domain); the interaction is calcium-dependent. In terms of tissue distribution, expressed in lateral hypodermal cells, marginal cells of the pharynx, vulva epithelial cells, ventral and dorsal nerve cords and commissures and various neurons in the anterior and posterior regions. Expressed in male tail structures including the diagonal muscles, sensory rays and spicules. Expressed in PHC neurons and most tail neurons and support cells of the phasmid neurons. Also expressed in pharyngeal muscle, head neurons, excretory canal cells and hypodermal seam cells.

Functionally, inhibits tax-6/calcineurin A phosphatase activity and thereby negatively regulates calcineurin-mediated functions. Plays a role in modulating temperature-dependent calcium responses in AFD neurons and in addition, also negatively regulates thermotaxis in a tax-6-dependent manner in AFD neurons. In response to changes in intracellular calcium levels may also regulate nuclear translocation of transcriptional regulators such as crtc-1. May play a role in regulating body size. Plays a role in male tail tip morphogenesis. In Caenorhabditis elegans, this protein is Calcipressin-like protein.